Here is a 716-residue protein sequence, read N- to C-terminus: 1,4-alpha-glucan branching enzyme GlgB (716 aa).

The Nucleophile role is filled by Asp398. Glu451 functions as the Proton donor in the catalytic mechanism.

The protein belongs to the glycosyl hydrolase 13 family. GlgB subfamily. In terms of assembly, monomer.

It catalyses the reaction Transfers a segment of a (1-&gt;4)-alpha-D-glucan chain to a primary hydroxy group in a similar glucan chain.. The protein operates within glycan biosynthesis; glycogen biosynthesis. Functionally, catalyzes the formation of the alpha-1,6-glucosidic linkages in glycogen by scission of a 1,4-alpha-linked oligosaccharide from growing alpha-1,4-glucan chains and the subsequent attachment of the oligosaccharide to the alpha-1,6 position. This is 1,4-alpha-glucan branching enzyme GlgB from Nitrobacter winogradskyi (strain ATCC 25391 / DSM 10237 / CIP 104748 / NCIMB 11846 / Nb-255).